The primary structure comprises 161 residues: Nucleotide-binding protein Plav_2177 (161 aa).

The protein belongs to the YajQ family.

Its function is as follows. Nucleotide-binding protein. The sequence is that of Nucleotide-binding protein Plav_2177 from Parvibaculum lavamentivorans (strain DS-1 / DSM 13023 / NCIMB 13966).